The chain runs to 100 residues: MRLTPHEQERLLLSYAAEVARRRQARGLRLNHPEAVALITDHVLEGARDGRTVAELMASGCEVLGRDDVMEGVPEMIADVQVEATFPDGTKLVTVHHPIR.

This sequence belongs to the urease gamma subunit family. In terms of assembly, heterotrimer of UreA (gamma), UreB (beta) and UreC (alpha) subunits. Three heterotrimers associate to form the active enzyme.

Its subcellular location is the cytoplasm. The enzyme catalyses urea + 2 H2O + H(+) = hydrogencarbonate + 2 NH4(+). The protein operates within nitrogen metabolism; urea degradation; CO(2) and NH(3) from urea (urease route): step 1/1. In Mycobacterium ulcerans (strain Agy99), this protein is Urease subunit gamma.